Consider the following 113-residue polypeptide: uncharacterized protein (113 aa).

A helical transmembrane segment spans residues 4-26 (VLFKIAVALLYLLSFFLHRLHLR). The disordered stretch occupies residues 32–74 (RRRRRRHHRRHHRRHHHHRRRRRRRRRRRRRHHRHHHHRHRRR).

The protein resides in the membrane. This is an uncharacterized protein from Saccharomyces cerevisiae (strain ATCC 204508 / S288c) (Baker's yeast).